A 305-amino-acid polypeptide reads, in one-letter code: HPr kinase/phosphorylase (305 aa).

Catalysis depends on residues H138 and K159. Position 153 to 160 (153 to 160 (GESGIGKS)) interacts with ATP. S160 contacts Mg(2+). D177 serves as the catalytic Proton acceptor; for phosphorylation activity. Proton donor; for dephosphorylation activity. An important for the catalytic mechanism of both phosphorylation and dephosphorylation region spans residues 201–210 (IEIRGIGILD). E202 is a Mg(2+) binding site. Residue R243 is part of the active site. Residues 264-269 (PVRPGR) are important for the catalytic mechanism of dephosphorylation.

The protein belongs to the HPrK/P family. As to quaternary structure, homohexamer. The cofactor is Mg(2+).

It catalyses the reaction [HPr protein]-L-serine + ATP = [HPr protein]-O-phospho-L-serine + ADP + H(+). It carries out the reaction [HPr protein]-O-phospho-L-serine + phosphate + H(+) = [HPr protein]-L-serine + diphosphate. In terms of biological role, catalyzes the ATP- as well as the pyrophosphate-dependent phosphorylation of a specific serine residue in HPr, a phosphocarrier protein of the phosphoenolpyruvate-dependent sugar phosphotransferase system (PTS). HprK/P also catalyzes the pyrophosphate-producing, inorganic phosphate-dependent dephosphorylation (phosphorolysis) of seryl-phosphorylated HPr (P-Ser-HPr). The two antagonistic activities of HprK/P are regulated by several intracellular metabolites, which change their concentration in response to the absence or presence of rapidly metabolisable carbon sources (glucose, fructose, etc.) in the growth medium. Therefore, by controlling the phosphorylation state of HPr, HPrK/P is a sensor enzyme that plays a major role in the regulation of carbon metabolism and sugar transport: it mediates carbon catabolite repression (CCR), and regulates PTS-catalyzed carbohydrate uptake and inducer exclusion. The polypeptide is HPr kinase/phosphorylase (Thermoanaerobacter pseudethanolicus (strain ATCC 33223 / 39E) (Clostridium thermohydrosulfuricum)).